We begin with the raw amino-acid sequence, 441 residues long: MSRMTVLSPSAGSQSACSLGLILVNPRRPLRSLSILFGLWKALIFLVIVICPGLGYDTSTSLLLYPTRDLSDVDPLHFPLSLRFVRWDSIYFVHAAEHGYVFEQEWAFGYGYTRLLALLASVLVLYRLSVNIFGGDTAKQKTLCFLSAALHIISPAGAFLSAPYGEALFSLLNISGLYLYSSSVLDAATNHRLSRDLKLLAAAVLISAATAVRSNGILGGVLFAYDALLQLPQILSRGLSLAVVSRLAVIVLGGCVIALGMAVPQYIAFNAFCMTSNAPRPWCGWTIPSIYRFVQEKYWNVGFLRYWVVPNIPLFLLAMPILALLLRSAFWAWRLPSVTSKFSENGANGALTKAMWLLPRLAIIQALLAVLAFTSYHVQIINRLSSGYPLWYWYLAAELISDFKNSQSTNKCISISAVAVQAIMIYGLIHAVLFGSFLPPA.

A run of 10 helical transmembrane segments spans residues Met-4 to Val-24, Ile-35 to Gly-55, Leu-115 to Gly-135, Leu-143 to Pro-163, Gly-165 to Leu-185, Leu-199 to Phe-223, Val-249 to Phe-269, Tyr-306 to Leu-326, Leu-361 to Ile-381, and Val-418 to Leu-438.

This sequence belongs to the PIGV family.

It is found in the endoplasmic reticulum membrane. It participates in glycolipid biosynthesis; glycosylphosphatidylinositol-anchor biosynthesis. In terms of biological role, mannosyltransferase involved in glycosylphosphatidylinositol-anchor biosynthesis. Transfers the second mannose to the glycosylphosphatidylinositol during GPI precursor assembly. The protein is GPI mannosyltransferase 2 (gpi18) of Aspergillus fumigatus (strain ATCC MYA-4609 / CBS 101355 / FGSC A1100 / Af293) (Neosartorya fumigata).